Consider the following 781-residue polypeptide: MAEPLKEDDGEDGSGEPPGPVKAEPAGTAASVAAKNLALLKARSFDVTFDVGDEYEIIETIGNGAYGVVSSARRRLTGQQVAIKKIPNAFDVVTNAKRTLRELKILKHFKHDNIIAIKDILRPTVPYGEFKSVYVVLDLMESDLHQIIHSSQPLTLEHVRYFLYQLLRGLKYMHSAQVIHRDLKPSNLLVNENCELKIGDFGMARGLCTSPAEHQYFMTEYVATRWYRAPELMLSLHEYTQAIDLWSVGCIFGEMLARRQLFPGKNYVHQLQLIMTVLGTPSPAVIQAVGAERVRAYIQSLPPRQPVPWETVYPGADRQALSLLGRMLRFEPSARVSAAAALRHPFLAKYHDPDDEPDCAPPFDFAFDREALTRERIKEAIVAEIEDFHARREGIRQQIRFQPSLQPVASEPGCPDVEMPSPWAPSGDCAMESPPPAPLPCPGPAPDTIDLTLQPPPPASEPAPPKKEGAISDNTKAALKAALLKSLRSRLRDGPSAPLEAPEPRKPVTAQERQREREEKRRRRQERAKEREKRRQERERKERGAGVSGGPSADPLAGLVLSDNDRSLLERWTRMAQPPAPAPATARPPSPPAGPATQPTGPLPQPACPPPAPAAGPAAPQTTAASGLLAPQPLVPPPGLPGPSALSVLPYFPSGPPPPDPGGAPQPSTSESPDVTLVTQQLSKSQVEDPLPPVFSGTPKGSGAGYGVGFDLEEFLNQSFDMGVADGPQDGQADSASLSASLLADWLEGHGMNPADIESLQREIQMDSPMLLADLPDLQEP.

The segment at 1 to 27 (MAEPLKEDDGEDGSGEPPGPVKAEPAG) is disordered. N-acetylalanine is present on Ala-2. The interval 2 to 77 (AEPLKEDDGE…VVSSARRRLT (76 aa)) is required for cytoplasmic targeting. Positions 55-347 (YEIIETIGNG…AAAALRHPFL (293 aa)) constitute a Protein kinase domain. ATP contacts are provided by residues 61–69 (IGNGAYGVV) and Lys-84. Positions 78 to 139 (GQQVAIKKIP…FKSVYVVLDL (62 aa)) are required for binding to MAP2K5. A necessary for oligomerization region spans residues 140–406 (MESDLHQIIH…QQIRFQPSLQ (267 aa)). Asp-182 serves as the catalytic Proton acceptor. The short motif at 219–221 (TEY) is the TXY element. The tract at residues 402-708 (QPSLQPVASE…PKGSGAGYGV (307 aa)) is disordered. Positions 407 to 781 (PVASEPGCPD…LADLPDLQEP (375 aa)) are may not be required for kinase activity; required to stimulate MEF2C activity. Pro residues-rich tracts occupy residues 433-445 (SPPP…PGPA) and 454-463 (QPPPPASEPA). The segment covering 476 to 486 (KAALKAALLKS) has biased composition (low complexity). 3 stretches are compositionally biased toward basic and acidic residues: residues 502–519 (PEPR…EREE), 527–544 (RAKE…KERG), and 563–573 (DNDRSLLERWT). Residues 505-539 (RKPVTAQERQREREEKRRRRQERAKEREKRRQERE) carry the Nuclear localization signal motif. Composition is skewed to pro residues over residues 578–594 (PPAP…PPAG) and 601–614 (GPLP…PAPA). Composition is skewed to low complexity over residues 615–632 (AGPA…LAPQ) and 642–652 (GPSALSVLPYF). The segment covering 653–664 (PSGPPPPDPGGA) has biased composition (pro residues). A compositionally biased stretch (polar residues) spans 668-685 (STSESPDVTLVTQQLSKS). At Ser-685 the chain carries Phosphoserine. Thr-698 bears the Phosphothreonine mark.

Belongs to the protein kinase superfamily. CMGC Ser/Thr protein kinase family. MAP kinase subfamily. As to quaternary structure, interacts with MAP2K5. Forms oligomers. Interacts with MEF2A, MEF2C and MEF2D; the interaction phosphorylates the MEF2s and enhances transcriptional activity of MEF2A, MEF2C but not MEF2D. Interacts with SGK1. Interacts with PML. Interacts (via N-terminal half) with HSP90AB1-CDC37 chaperone complex in resting cells; the interaction is MAP2K5-independent and prevents MAPK7 from ubiquitination and proteasomal degradation. Interacts with STUB1/CHIP; the interaction is enhanced in the presence of IGF1 or MAP2K5 and promotes STUB1/CHIP E3 ligase activity. Requires Mg(2+) as cofactor. In terms of processing, dually phosphorylated on Thr-219 and Tyr-221, which activates the enzyme.

The protein resides in the cytoplasm. Its subcellular location is the nucleus. The protein localises to the PML body. The catalysed reaction is L-seryl-[protein] + ATP = O-phospho-L-seryl-[protein] + ADP + H(+). It catalyses the reaction L-threonyl-[protein] + ATP = O-phospho-L-threonyl-[protein] + ADP + H(+). Activated by tyrosine and threonine phosphorylation. Activated in response to hyperosmolarity, hydrogen peroxide, and epidermal growth factor (EGF). Plays a role in various cellular processes such as proliferation, differentiation and cell survival. The upstream activator of MAPK7 is the MAPK kinase MAP2K5. Upon activation, it translocates to the nucleus and phosphorylates various downstream targets including MEF2C. EGF activates MAPK7 through a Ras-independent and MAP2K5-dependent pathway. As part of the MAPK/ERK signaling pathway, acts as a negative regulator of apoptosis in cardiomyocytes via interaction with STUB1/CHIP and promotion of STUB1-mediated ubiquitination and degradation of ICER-type isoforms of CREM. May have a role in muscle cell differentiation. May be important for endothelial function and maintenance of blood vessel integrity. MAP2K5 and MAPK7 interact specifically with one another and not with MEK1/ERK1 or MEK2/ERK2 pathways. Phosphorylates SGK1 at Ser-78 and this is required for growth factor-induced cell cycle progression. Involved in the regulation of p53/TP53 by disrupting the PML-MDM2 interaction. The chain is Mitogen-activated protein kinase 7 (MAPK7) from Bos taurus (Bovine).